Here is a 439-residue protein sequence, read N- to C-terminus: Xylose isomerase (439 aa).

Active-site residues include histidine 103 and aspartate 106. Residues glutamate 234, glutamate 270, histidine 273, aspartate 298, aspartate 309, aspartate 311, and aspartate 341 each contribute to the Mg(2+) site.

Belongs to the xylose isomerase family. In terms of assembly, homotetramer. Mg(2+) serves as cofactor.

It localises to the cytoplasm. The catalysed reaction is alpha-D-xylose = alpha-D-xylulofuranose. In Bacteroides fragilis (strain YCH46), this protein is Xylose isomerase.